We begin with the raw amino-acid sequence, 181 residues long: Mating-type protein A1 (181 aa).

A DNA-binding region (homeobox) is located at residues 122-181; that stretch reads DKKKRRHIPESSKELLEKAFKVKRFPNSKERERIARECGISPLQVRVWFTNKRARSKSRA.

Belongs to the MATA1 family.

The protein resides in the nucleus. Mating type proteins are sequence specific DNA-binding proteins that act as master switches in yeast differentiation by controlling gene expression in a cell type-specific fashion. The chain is Mating-type protein A1 (MATA1) from Pichia angusta (Yeast).